Here is a 90-residue protein sequence, read N- to C-terminus: Small ribosomal subunit protein uS15c (90 aa).

This sequence belongs to the universal ribosomal protein uS15 family. As to quaternary structure, part of the 30S ribosomal subunit.

It is found in the plastid. The protein resides in the chloroplast. The polypeptide is Small ribosomal subunit protein uS15c (rps15) (Dioscorea elephantipes (Elephant's foot yam)).